Here is a 268-residue protein sequence, read N- to C-terminus: Undecaprenyl-diphosphatase 1 (268 aa).

The next 7 helical transmembrane spans lie at 5–25 (SIIS…IPVS), 43–63 (GNTF…LVYF), 84–104 (LAVL…HDFI), 107–127 (VLFE…FILL), 184–204 (AAEF…VLDL), 218–238 (LIAV…RSLL), and 247–267 (APFA…LLVI).

This sequence belongs to the UppP family.

Its subcellular location is the cell inner membrane. The enzyme catalyses di-trans,octa-cis-undecaprenyl diphosphate + H2O = di-trans,octa-cis-undecaprenyl phosphate + phosphate + H(+). Its function is as follows. Catalyzes the dephosphorylation of undecaprenyl diphosphate (UPP). Confers resistance to bacitracin. This Agrobacterium fabrum (strain C58 / ATCC 33970) (Agrobacterium tumefaciens (strain C58)) protein is Undecaprenyl-diphosphatase 1.